Consider the following 276-residue polypeptide: ADP-dependent (S)-NAD(P)H-hydrate dehydratase (276 aa).

The region spanning T5–F269 is the YjeF C-terminal domain. The (6S)-NADPHX site is built by A40, G103, and H152. An AMP-binding site is contributed by G211. Residue D212 participates in (6S)-NADPHX binding.

Belongs to the NnrD/CARKD family. As to quaternary structure, homotetramer. Mg(2+) serves as cofactor.

The enzyme catalyses (6S)-NADHX + ADP = AMP + phosphate + NADH + H(+). It catalyses the reaction (6S)-NADPHX + ADP = AMP + phosphate + NADPH + H(+). Its function is as follows. Catalyzes the dehydration of the S-form of NAD(P)HX at the expense of ADP, which is converted to AMP. Together with NAD(P)HX epimerase, which catalyzes the epimerization of the S- and R-forms, the enzyme allows the repair of both epimers of NAD(P)HX, a damaged form of NAD(P)H that is a result of enzymatic or heat-dependent hydration. The chain is ADP-dependent (S)-NAD(P)H-hydrate dehydratase from Listeria monocytogenes serovar 1/2a (strain ATCC BAA-679 / EGD-e).